The primary structure comprises 538 residues: CTP synthase (538 aa).

Positions 1 to 266 (MRTKYIFITG…DQKIVDLLNI (266 aa)) are amidoligase domain. S14 lines the CTP pocket. S14 provides a ligand contact to UTP. Residues 15-20 (SLGKGL) and D72 contribute to the ATP site. 2 residues coordinate Mg(2+): D72 and E140. CTP-binding positions include 147–149 (DIE), 187–192 (KTKPTQ), and K223. UTP-binding positions include 187-192 (KTKPTQ) and K223. 239-241 (KDV) contacts ATP. One can recognise a Glutamine amidotransferase type-1 domain in the interval 291–533 (NIAIVGKYVN…IEAALRYRKK (243 aa)). G353 is a binding site for L-glutamine. Catalysis depends on C380, which acts as the Nucleophile; for glutamine hydrolysis. L-glutamine is bound by residues 381–384 (LGMQ), E404, and R461. Active-site residues include H506 and E508.

It belongs to the CTP synthase family. In terms of assembly, homotetramer.

The enzyme catalyses UTP + L-glutamine + ATP + H2O = CTP + L-glutamate + ADP + phosphate + 2 H(+). It catalyses the reaction L-glutamine + H2O = L-glutamate + NH4(+). The catalysed reaction is UTP + NH4(+) + ATP = CTP + ADP + phosphate + 2 H(+). Its pathway is pyrimidine metabolism; CTP biosynthesis via de novo pathway; CTP from UDP: step 2/2. Allosterically activated by GTP, when glutamine is the substrate; GTP has no effect on the reaction when ammonia is the substrate. The allosteric effector GTP functions by stabilizing the protein conformation that binds the tetrahedral intermediate(s) formed during glutamine hydrolysis. Inhibited by the product CTP, via allosteric rather than competitive inhibition. In terms of biological role, catalyzes the ATP-dependent amination of UTP to CTP with either L-glutamine or ammonia as the source of nitrogen. Regulates intracellular CTP levels through interactions with the four ribonucleotide triphosphates. This chain is CTP synthase, found in Syntrophus aciditrophicus (strain SB).